The chain runs to 470 residues: Annexin C1 (470 aa).

The disordered stretch occupies residues 1-143 (MYGQQNNYGA…QGQSPMMYLG (143 aa)). Residues 15–34 (QWGQAPPQGYQPGYQNGPPA) are compositionally biased toward low complexity. Pro residues predominate over residues 82–92 (PQPPFGAPSPA). 2 stretches are compositionally biased toward low complexity: residues 93–110 (PAGY…YGAP) and 128–138 (GYGSQPQGQSP). Annexin repeat units follow at residues 161 to 232 (YDAR…LLSL), 233 to 304 (GPLG…MALS), 316 to 388 (QLVQ…FIAR), and 395 to 468 (DGVV…GIIE).

It belongs to the annexin family.

In terms of biological role, does not appear to play a major role in virulence. May play a role in titan cell formation. The chain is Annexin C1 from Cryptococcus neoformans var. grubii serotype A (strain H99 / ATCC 208821 / CBS 10515 / FGSC 9487) (Filobasidiella neoformans var. grubii).